We begin with the raw amino-acid sequence, 616 residues long: MTVLPDDGLSLAAEFPDATHEQWHRLVEGVVRKSGKDVSGTAAEEALSTTLEDGLTTRPLYTARDAAPDAGFPGFAPFVRGSVPEGNTPGGWDVRQRYASADPARTNEAVLTDLENGVTSLWLTLGSAGLPVTGLERALDGVYLDLVPVALDAGSEAATAARELLRLYEAAGVADDAVRGTLGADPLGHEARTGEKSTSFAAVAELARLCGERYPGLRALTVDALPYHEAGASAAQELGASLATGVEYLRALHDKGLGVEKAFAQLEFRFAATADQFLTIAKLRAARRLWARVAEVSGVPAAGAQRQHAVTSPVMMTRRDPWVNMLRTTVACLGAGVGGADAVTVLPFDHELGLPDAFARRIARNTSTILLEESHLARVIDPAGGSWYVERLTDELAHAAWDFFKEIERADGQVAALRSGLVGDRIAATWAERRKKLARRREPITGVSEFPLLTERPVEREPAPAAPPGGLPRVRRDEAYEELRGRSDAHLEATGARPKVFIAALGPAAAHTARATFAANLFMAGGVEPVHDPVSVDAETAAEAFAASGATVACLCSSDVLYAEQAEAVARALKSAGALRVFLAGRGEFADIDEYVFAGCDAVAVLTSTLDRMGVA.

It belongs to the methylmalonyl-CoA mutase family. As to quaternary structure, heterodimer of an alpha and a beta chain. The cofactor is adenosylcob(III)alamin.

The catalysed reaction is (R)-methylmalonyl-CoA = succinyl-CoA. It functions in the pathway metabolic intermediate metabolism; propanoyl-CoA degradation; succinyl-CoA from propanoyl-CoA: step 3/3. In terms of biological role, catalyzes the isomerization of succinyl-CoA to methylmalonyl-CoA during synthesis of propionate from tricarboxylic acid-cycle intermediates. This conversion most likely represents an important source of building blocks for polyketide antibiotic biosynthesis. It is unable to catalyze the conversion of isobutyryl-CoA into N-butyryl-CoA. The chain is Methylmalonyl-CoA mutase small subunit (mutA) from Streptomyces virginiae (Streptomyces cinnamonensis).